Here is an 817-residue protein sequence, read N- to C-terminus: Trehalose-phosphatase (817 aa).

Residues 1-547 are glycosyltransferase; it reads MSVYGKIPST…LAATKTDQRI (547 aa).

This sequence in the N-terminal section; belongs to the glycosyltransferase 20 family. The protein in the C-terminal section; belongs to the trehalose phosphatase family. As to quaternary structure, component of the trehalose synthase complex that contains at least tps1, ntp1, and tpp1. Interacts with tps1. Interacts with ntp1. Mg(2+) serves as cofactor.

The enzyme catalyses alpha,alpha-trehalose 6-phosphate + H2O = alpha,alpha-trehalose + phosphate. Its pathway is carbohydrate biosynthesis. Its function is as follows. Phosphatase catalytic subunit of the trehalose synthase complex that catalyzes the production of trehalose from glucose-6-phosphate and UDP-alpha-D-glucose in a two step process. The disaccharide trehalose serves as a storage carbohydrate that is mobilized during nutrient stress and spore germination. Together with ntp1, regulates the level of trehalose as a protectant for cell integrity during thermal, osmotic, and oxidative stress. This Schizosaccharomyces pombe (strain 972 / ATCC 24843) (Fission yeast) protein is Trehalose-phosphatase.